We begin with the raw amino-acid sequence, 195 residues long: MARSAAIERITKETQIKLSLEIDGKGEAQICTSVPFLDHMLDLFARHGLFDLKVEAHGDIDIDFHHTVEDIGIVLGTAFKEALGDKCGIRRYGNAVVPMDEVLASVATDLSGRPYLVYNVELPKVKIGDFDVELVREFFQGFVNHCGANLHLNLMYGDNVHHIVEACFKAAARALDQATQLDARIEGVMSTKGKL.

The protein belongs to the imidazoleglycerol-phosphate dehydratase family.

It localises to the cytoplasm. It catalyses the reaction D-erythro-1-(imidazol-4-yl)glycerol 3-phosphate = 3-(imidazol-4-yl)-2-oxopropyl phosphate + H2O. Its pathway is amino-acid biosynthesis; L-histidine biosynthesis; L-histidine from 5-phospho-alpha-D-ribose 1-diphosphate: step 6/9. The protein is Imidazoleglycerol-phosphate dehydratase of Citrifermentans bemidjiense (strain ATCC BAA-1014 / DSM 16622 / JCM 12645 / Bem) (Geobacter bemidjiensis).